We begin with the raw amino-acid sequence, 854 residues long: Translation initiation factor IF-2 (854 aa).

Over residues 61-72 (KNIKTPTAKKPK) the composition is skewed to basic residues. Disordered stretches follow at residues 61-115 (KNIK…LASA) and 167-186 (ESLK…KKES). Positions 73–108 (KENAKDQEKLNESEKKEPKKEESKEQEKQEIIDTHK) are enriched in basic and acidic residues. Positions 353–520 (TRAPVITIMG…IVLLQADILE (168 aa)) constitute a tr-type G domain. Residues 362–369 (GHVDHGKT) form a G1 region. 362–369 (GHVDHGKT) contributes to the GTP binding site. The G2 stretch occupies residues 387-391 (GITQH). Positions 408–411 (DTPG) are G3. GTP is bound by residues 408–412 (DTPGH) and 462–465 (NKMD). Residues 462–465 (NKMD) are G4. The interval 498–500 (SAK) is G5.

The protein belongs to the TRAFAC class translation factor GTPase superfamily. Classic translation factor GTPase family. IF-2 subfamily.

It localises to the cytoplasm. Its function is as follows. One of the essential components for the initiation of protein synthesis. Protects formylmethionyl-tRNA from spontaneous hydrolysis and promotes its binding to the 30S ribosomal subunits. Also involved in the hydrolysis of GTP during the formation of the 70S ribosomal complex. The chain is Translation initiation factor IF-2 from Campylobacter jejuni subsp. doylei (strain ATCC BAA-1458 / RM4099 / 269.97).